The primary structure comprises 250 residues: Endonuclease NucS 2 (250 aa).

The protein belongs to the NucS endonuclease family.

The protein localises to the cytoplasm. Cleaves both 3' and 5' ssDNA extremities of branched DNA structures. This Halobacterium salinarum (strain ATCC 700922 / JCM 11081 / NRC-1) (Halobacterium halobium) protein is Endonuclease NucS 2.